The following is a 1670-amino-acid chain: Hemolymph clottable protein (1670 aa).

Residues 1-14 (MKALILLLLGACQA) form the signal peptide. A vittelogenin region spans residues 15–674 (LQPGLEYQYR…FANFVTTTIY (660 aa)). Residues 15 to 764 (LQPGLEYQYR…LKIDGQQRGL (750 aa)) enclose the Vitellogenin domain. N-linked (GlcNAc...) asparagine glycosylation occurs at asparagine 106. Residues 198–231 (SSYTTKTKSKTSSKTSSKTSSKTSSKTSKTGKTS) show a composition bias toward low complexity. The disordered stretch occupies residues 198 to 236 (SSYTTKTKSKTSSKTSSKTSSKTSSKTSKTGKTSPGQLA). Asparagine 319, asparagine 459, and asparagine 1301 each carry an N-linked (GlcNAc...) asparagine glycan. The region spanning 1390 to 1550 (VSCTIDETKV…SWASPGEGCA (161 aa)) is the VWFD domain. 2 disulfide bridges follow: cysteine 1392-cysteine 1513 and cysteine 1414-cysteine 1549.

In terms of assembly, homodimer; disulfide-linked. Also exists as oligomers. Glycosylated. Contains mannose and N-acetylglucosamine. Post-translationally, substrate of transglutaminase. Widely expressed with highest levels in gill and heart. Not expressed in hemocytes.

It localises to the secreted. Functionally, forms stable clots in the presence of calcium. This chain is Hemolymph clottable protein, found in Penaeus monodon (Giant tiger prawn).